Here is a 51-residue protein sequence, read N- to C-terminus: Large ribosomal subunit protein eL39 (51 aa).

It belongs to the eukaryotic ribosomal protein eL39 family.

This chain is Large ribosomal subunit protein eL39 (rpl39e), found in Pyrobaculum aerophilum (strain ATCC 51768 / DSM 7523 / JCM 9630 / CIP 104966 / NBRC 100827 / IM2).